A 560-amino-acid polypeptide reads, in one-letter code: Membrane protein insertase YidC (560 aa).

The next 6 helical transmembrane spans lie at 5–25 (IINL…WQYF), 334–354 (AIDF…MNFF), 357–377 (YVGN…LLMF), 431–451 (LPIL…YVTI), 476–496 (LFGL…WPIL), and 522–542 (FMPL…LIYW).

It belongs to the OXA1/ALB3/YidC family. Type 1 subfamily. As to quaternary structure, interacts with the Sec translocase complex via SecD. Specifically interacts with transmembrane segments of nascent integral membrane proteins during membrane integration.

It localises to the cell inner membrane. Required for the insertion and/or proper folding and/or complex formation of integral membrane proteins into the membrane. Involved in integration of membrane proteins that insert both dependently and independently of the Sec translocase complex, as well as at least some lipoproteins. Aids folding of multispanning membrane proteins. The protein is Membrane protein insertase YidC of Rickettsia rickettsii (strain Sheila Smith).